Here is a 219-residue protein sequence, read N- to C-terminus: 2-C-methyl-D-erythritol 4-phosphate cytidylyltransferase (219 aa).

It belongs to the IspD/TarI cytidylyltransferase family. IspD subfamily.

The enzyme catalyses 2-C-methyl-D-erythritol 4-phosphate + CTP + H(+) = 4-CDP-2-C-methyl-D-erythritol + diphosphate. It participates in isoprenoid biosynthesis; isopentenyl diphosphate biosynthesis via DXP pathway; isopentenyl diphosphate from 1-deoxy-D-xylulose 5-phosphate: step 2/6. Catalyzes the formation of 4-diphosphocytidyl-2-C-methyl-D-erythritol from CTP and 2-C-methyl-D-erythritol 4-phosphate (MEP). This is 2-C-methyl-D-erythritol 4-phosphate cytidylyltransferase from Bacteroides fragilis (strain ATCC 25285 / DSM 2151 / CCUG 4856 / JCM 11019 / LMG 10263 / NCTC 9343 / Onslow / VPI 2553 / EN-2).